The chain runs to 391 residues: MSLNPRDVVIVDFGRTPMGRSKGGMHRNTRAEDMSAHLISKLLERNNKVDPAEVEDVIWGCVNQTLEQGWNIARMASLLTQIPHTSAAQTVSRLCGSSMSALHTAAQAIMTNNGDVFVIGGVEHMGHVSMMHGVDPNPHMSLHAAKASGMMGLTAEMLGKMHGITREQQDAFGLRSHQLAHKATLEGKFKDEIIPMQGYDENGFLRVFDYDETIRPDTTLESLAALKPAFNPKGGTVTAGTSSQITDGASCMIVMSAQRAQDLGIQPLAVIRSMAVAGVDPAIMGYGPVPATQKALKRAGLSISDIDFFELNEAFAAQALPVLKDLKVLDKMNEKVNLHGGAIALGHPFGCSGARISGTLLNVMKQNGGTFGVSTMCIGLGQGIATVFERV.

The active-site Acyl-thioester intermediate is C95. Active-site proton acceptor residues include H347 and C377.

The protein belongs to the thiolase-like superfamily. Thiolase family. Heterotetramer of two alpha chains (FadB) and two beta chains (FadA).

The protein resides in the cytoplasm. It catalyses the reaction an acyl-CoA + acetyl-CoA = a 3-oxoacyl-CoA + CoA. The protein operates within lipid metabolism; fatty acid beta-oxidation. In terms of biological role, catalyzes the final step of fatty acid oxidation in which acetyl-CoA is released and the CoA ester of a fatty acid two carbons shorter is formed. In Pseudomonas syringae pv. tomato (strain ATCC BAA-871 / DC3000), this protein is 3-ketoacyl-CoA thiolase.